A 402-amino-acid polypeptide reads, in one-letter code: Elongation factor Tu (402 aa).

The tr-type G domain maps to 10–212 (KPHVNIGTIG…AVDEYIPTPE (203 aa)). Positions 19–26 (GHVDHGKT) are G1. Position 19–26 (19–26 (GHVDHGKT)) interacts with GTP. Mg(2+) is bound at residue threonine 26. The G2 stretch occupies residues 60–64 (GITIA). Residues 81–84 (DCPG) form a G3 region. GTP-binding positions include 81–85 (DCPGH) and 136–139 (NKED). Residues 136 to 139 (NKED) are G4. A G5 region spans residues 177-179 (SAF).

This sequence belongs to the TRAFAC class translation factor GTPase superfamily. Classic translation factor GTPase family. EF-Tu/EF-1A subfamily. As to quaternary structure, monomer.

The protein resides in the cytoplasm. The enzyme catalyses GTP + H2O = GDP + phosphate + H(+). Its function is as follows. GTP hydrolase that promotes the GTP-dependent binding of aminoacyl-tRNA to the A-site of ribosomes during protein biosynthesis. In Aliarcobacter butzleri (strain RM4018) (Arcobacter butzleri), this protein is Elongation factor Tu.